A 495-amino-acid chain; its full sequence is Lysine--tRNA ligase (495 aa).

Residues E406 and E413 each contribute to the Mg(2+) site.

Belongs to the class-II aminoacyl-tRNA synthetase family. In terms of assembly, homodimer. Mg(2+) serves as cofactor.

The protein resides in the cytoplasm. It carries out the reaction tRNA(Lys) + L-lysine + ATP = L-lysyl-tRNA(Lys) + AMP + diphosphate. The protein is Lysine--tRNA ligase (lysS) of Staphylococcus aureus.